We begin with the raw amino-acid sequence, 545 residues long: Indole-3-pyruvate decarboxylase (545 aa).

Residue glutamate 48 participates in thiamine diphosphate binding. The segment at 382–460 (DCLFTAMDMI…VILFNNASWE (79 aa)) is thiamine pyrophosphate binding. Aspartate 429 and asparagine 456 together coordinate Mg(2+).

The protein belongs to the TPP enzyme family. Requires a metal cation as cofactor. It depends on thiamine diphosphate as a cofactor.

The catalysed reaction is indole-3-pyruvate + H(+) = indole-3-acetaldehyde + CO2. It participates in plant hormone metabolism; auxin biosynthesis. The protein is Indole-3-pyruvate decarboxylase (ipdC) of Azospirillum brasilense.